The primary structure comprises 81 residues: Cytotoxin 1b (81 aa).

An N-terminal signal peptide occupies residues 1 to 21 (MKTLLLTLVVVTIVCLDLGYT). Disulfide bonds link Cys24-Cys42, Cys35-Cys59, Cys63-Cys74, and Cys75-Cys80.

This sequence belongs to the three-finger toxin family. Short-chain subfamily. Type IA cytotoxin sub-subfamily. As to quaternary structure, monomer in solution; Homodimer and oligomer in the presence of negatively charged lipids forming a pore with a size ranging between 20 and 30 Angstroms. Expressed by the venom gland.

The protein localises to the secreted. The protein resides in the target cell membrane. Shows cytolytic activity on many different cells by forming pore in lipid membranes. In vivo, increases heart rate or kills the animal by cardiac arrest. In addition, it binds to heparin with high affinity, interacts with Kv channel-interacting protein 1 (KCNIP1) in a calcium-independent manner, and binds to integrin alpha-V/beta-3 (ITGAV/ITGB3) with moderate affinity. In Naja atra (Chinese cobra), this protein is Cytotoxin 1b.